The following is a 431-amino-acid chain: Xaa-Arg dipeptidase (431 aa).

The protein belongs to the peptidase M20A family.

The catalysed reaction is beta-alanyl-L-lysine + H2O = beta-alanine + L-lysine. It catalyses the reaction beta-alanyl-L-arginine + H2O = beta-alanine + L-arginine. The enzyme catalyses beta-alanyl-L-ornithine + H2O = beta-alanine + L-ornithine. It carries out the reaction N(2)-(4-aminobutanoyl)-L-lysine + H2O = 4-aminobutanoate + L-lysine. The catalysed reaction is N(2)-(4-aminobutanoyl)-L-arginine + H2O = 4-aminobutanoate + L-arginine. It catalyses the reaction N(2)-(4-aminobutanoyl)-L-ornithine + H2O = 4-aminobutanoate + L-ornithine. Functionally, catalyzes the peptide bond hydrolysis in dipeptides having basic amino acids lysine, ornithine or arginine at C-terminus. Postulated to function in a metabolite repair mechanism by eliminating alternate dipeptide by-products formed during carnosine synthesis. The chain is Xaa-Arg dipeptidase from Mus musculus (Mouse).